Reading from the N-terminus, the 493-residue chain is GPI alpha-1,6-mannosyltransferase 2 (493 aa).

Over 1 to 13 the chain is Cytoplasmic; the sequence is MWPQDPSRKEVLR. The helical transmembrane segment at 14 to 34 threads the bilayer; the sequence is FAVSCRILTLMLQALFNAIIP. Topologically, residues 35–77 are lumenal; that stretch reads DHHAEAFSPPRLAPSGFVDQLVEGLLGGLSHWDAEHFLFIAEH. Residues 78–98 traverse the membrane as a helical segment; it reads GYLYEHNFAFFPGFPLALLVG. Over 99-113 the chain is Cytoplasmic; it reads TELLRPLRGLLSLRS. Residues 114-134 form a helical membrane-spanning segment; sequence CLLISVASLNFLFFMLAAVAL. Residues 135–136 lie on the Lumenal side of the membrane; it reads HD. The chain crosses the membrane as a helical span at residues 137 to 157; that stretch reads LGCLVLHCPHQSFYAALLFCL. The Cytoplasmic portion of the chain corresponds to 158 to 161; that stretch reads SPAN. The chain crosses the membrane as a helical span at residues 162–182; the sequence is VFLAAGYSEALFALLTFSAMG. Residues 183–192 are Lumenal-facing; the sequence is QLERGRVWTS. The helical transmembrane segment at 193-213 threads the bilayer; sequence VLLFAFATGVRSNGLVSVGFL. Over 214–234 the chain is Cytoplasmic; that stretch reads MHSQCQGFFSSLTMLNPLRQL. Residues 235 to 255 form a helical membrane-spanning segment; sequence FKLMASLFLSVFTLGLPFALF. Topologically, residues 256–327 are lumenal; that stretch reads QYYAYTQFCL…KYYELKQVPN (72 aa). A helical membrane pass occupies residues 328-348; it reads FLLAAPVAILVAWATWTYVTT. Residues 349–378 are Cytoplasmic-facing; the sequence is HPWLCLTLGLQRSKNNKTLEKPDLGFLSPQ. A helical transmembrane segment spans residues 379-399; it reads VFVYVVHAAVLLLFGGLCMHV. Topologically, residues 400–469 are lumenal; that stretch reads QVLTRFLGSS…HWKTCSPVTR (70 aa). Residues 470 to 490 traverse the membrane as a helical segment; sequence YILGYFLTYWLLGLLLHCNFL. Residues 491–493 are Cytoplasmic-facing; it reads PWT.

It belongs to the PIGV family. Not N-glycosylated.

It is found in the endoplasmic reticulum membrane. It participates in glycolipid biosynthesis; glycosylphosphatidylinositol-anchor biosynthesis. Functionally, alpha-1,6-mannosyltransferase that catalyzes the transfer of the second mannose, via an alpha-1,6 bond, from a dolichol-phosphate-mannose (Dol-P-Man) to the alpha-D-Man-(1-&gt;4)-alpha-D-GlcN-(1-&gt;6)-(1-radyl,2-acyl-sn-glycero-3-phospho)-2-acyl-inositol (also termed H2) intermediate to generate an alpha-D-Man-(1-&gt;6)-alpha-D-Man-(1-&gt;4)-alpha-D-GlcN-(1-&gt;6)-(1-radyl,2-acyl-sn-glycero-3-phospho)-2-acyl-inositol (also termed H3) and participates in the seventh step of the glycosylphosphatidylinositol-anchor biosynthesis. Also transfers the second mannose on a 2-PEtn-alpha-D-Man-(1-&gt;4)-alpha-D-GlcN-(1-&gt;6)-(1-radyl,2-acyl-sn-glycero-3-phospho)-2-acyl-inositol (also termed H5). The sequence is that of GPI alpha-1,6-mannosyltransferase 2 from Homo sapiens (Human).